A 395-amino-acid polypeptide reads, in one-letter code: Glutamate N-acetyltransferase (395 aa).

Substrate-binding residues include Thr-146, Lys-169, Thr-180, Glu-263, Asn-390, and Thr-395. Thr-180 functions as the Nucleophile in the catalytic mechanism.

This sequence belongs to the ArgJ family. Heterotetramer of two alpha and two beta chains.

It is found in the cytoplasm. The catalysed reaction is N(2)-acetyl-L-ornithine + L-glutamate = N-acetyl-L-glutamate + L-ornithine. The protein operates within amino-acid biosynthesis; L-arginine biosynthesis; L-ornithine and N-acetyl-L-glutamate from L-glutamate and N(2)-acetyl-L-ornithine (cyclic): step 1/1. Catalyzes the transfer of the acetyl group from N(2)-acetylornithine to glutamate, forming N-acetylglutamate and L-ornithine. The chain is Glutamate N-acetyltransferase from Methanosarcina mazei (strain ATCC BAA-159 / DSM 3647 / Goe1 / Go1 / JCM 11833 / OCM 88) (Methanosarcina frisia).